A 631-amino-acid chain; its full sequence is Chaperone protein DnaK (631 aa).

Thr198 is modified (phosphothreonine; by autocatalysis). The segment at 598–631 is disordered; it reads YSAQQGGEQPGAAKKDDVVDAEFTEVDDDKKKSA.

This sequence belongs to the heat shock protein 70 family.

Its function is as follows. Acts as a chaperone. The chain is Chaperone protein DnaK from Azorhizobium caulinodans (strain ATCC 43989 / DSM 5975 / JCM 20966 / LMG 6465 / NBRC 14845 / NCIMB 13405 / ORS 571).